The sequence spans 310 residues: Ribonuclease HIII (310 aa).

The 217-residue stretch at phenylalanine 90–lysine 306 folds into the RNase H type-2 domain. 3 residues coordinate a divalent metal cation: aspartate 96, glutamate 97, and aspartate 201.

This sequence belongs to the RNase HII family. RnhC subfamily. The cofactor is Mn(2+). Mg(2+) is required as a cofactor.

Its subcellular location is the cytoplasm. The catalysed reaction is Endonucleolytic cleavage to 5'-phosphomonoester.. Endonuclease that specifically degrades the RNA of RNA-DNA hybrids. In Staphylococcus saprophyticus subsp. saprophyticus (strain ATCC 15305 / DSM 20229 / NCIMB 8711 / NCTC 7292 / S-41), this protein is Ribonuclease HIII.